The sequence spans 355 residues: UDP-N-acetylglucosamine--N-acetylmuramyl-(pentapeptide) pyrophosphoryl-undecaprenol N-acetylglucosamine transferase (355 aa).

Residues 15-17 (TGG), Asn127, Arg163, Ser191, Ile244, 263-268 (ALTVSE), and Gln288 contribute to the UDP-N-acetyl-alpha-D-glucosamine site.

It belongs to the glycosyltransferase 28 family. MurG subfamily.

Its subcellular location is the cell inner membrane. It catalyses the reaction di-trans,octa-cis-undecaprenyl diphospho-N-acetyl-alpha-D-muramoyl-L-alanyl-D-glutamyl-meso-2,6-diaminopimeloyl-D-alanyl-D-alanine + UDP-N-acetyl-alpha-D-glucosamine = di-trans,octa-cis-undecaprenyl diphospho-[N-acetyl-alpha-D-glucosaminyl-(1-&gt;4)]-N-acetyl-alpha-D-muramoyl-L-alanyl-D-glutamyl-meso-2,6-diaminopimeloyl-D-alanyl-D-alanine + UDP + H(+). The protein operates within cell wall biogenesis; peptidoglycan biosynthesis. Cell wall formation. Catalyzes the transfer of a GlcNAc subunit on undecaprenyl-pyrophosphoryl-MurNAc-pentapeptide (lipid intermediate I) to form undecaprenyl-pyrophosphoryl-MurNAc-(pentapeptide)GlcNAc (lipid intermediate II). This Salmonella dublin (strain CT_02021853) protein is UDP-N-acetylglucosamine--N-acetylmuramyl-(pentapeptide) pyrophosphoryl-undecaprenol N-acetylglucosamine transferase.